The following is a 2350-amino-acid chain: Probable JmjC domain-containing histone demethylation protein 2C (2350 aa).

Disordered stretches follow at residues 96 to 302 (TRAQ…LQEC) and 314 to 336 (PKDR…NDTH). Polar residues predominate over residues 98–127 (AQANSPRPAMNSQAAVPKQNTHQQQQQRSI). Phosphoserine occurs at positions 135 and 138. A compositionally biased stretch (basic and acidic residues) spans 141–160 (DEEKMKEDKYDCVSRGENPK). Over residues 161–171 (GKNKHVVTKRR) the composition is skewed to basic residues. Residues 172 to 189 (KPEEAEKRLSMKRLRTDN) show a composition bias toward basic and acidic residues. Over residues 190 to 200 (ASDASESSDAE) the composition is skewed to low complexity. 2 positions are modified to phosphoserine: Ser-191 and Ser-194. Residues 257–280 (QEDKNHNEGEKPKSTDSHLQDKMT) are compositionally biased toward basic and acidic residues. The segment covering 281 to 302 (LRSSEQATVADHNSNDSVLQEC) has biased composition (polar residues). Phosphoserine occurs at positions 294 and 320. A Phosphothreonine modification is found at Thr-324. Phosphoserine occurs at positions 420, 436, 457, 458, 460, 471, and 762. Disordered regions lie at residues 426 to 486 (SVTE…NSQA), 747 to 766 (SSAE…PPLT), 859 to 883 (RENY…DKDV), 1030 to 1083 (RKES…DQSL), and 1422 to 1508 (EKVS…VPRS). Composition is skewed to low complexity over residues 863–874 (SRVVPSSSSPKS) and 1034–1045 (SYSSLSPPTLTP). Residues 1071 to 1083 (SQSNFKNSSDQSL) are compositionally biased toward polar residues. Over residues 1454 to 1463 (KRQPKPTYKK) the composition is skewed to basic residues. Basic and acidic residues predominate over residues 1464-1480 (KQNDLQKRKGEVEEDSK). A C6-type zinc finger spans residues 1657–1682 (CDACEATLFNVHWVCRKCGFVACLDC). Positions 1776-1818 (KTSVSLPESQQQNSPQKSQTNGNSSPGSASTDSRLTPPESQSP) are enriched in polar residues. Residues 1776–1874 (KTSVSLPESQ…PASQSNEQGS (99 aa)) form a disordered region. Residue Ser-1800 is modified to Phosphoserine. The span at 1826–1849 (AEQKSREEKQENKEFTLEREIKED) shows a compositional bias: basic and acidic residues. The segment covering 1855–1874 (SDSPNGSTSPPASQSNEQGS) has biased composition (polar residues). The LXXLL motif motif lies at 1876-1880 (LRDLL). A disordered region spans residues 1933 to 1962 (PNKTSKINIKSEPNEEPKESSLPATDESNK). Lys-1942 is covalently cross-linked (Glycyl lysine isopeptide (Lys-Gly) (interchain with G-Cter in SUMO2)). Positions 2084-2308 (MPTRYEDFLR…QSFHLTQELR (225 aa)) constitute a JmjC domain. His-2146, Glu-2148, and His-2276 together coordinate Fe cation.

Belongs to the JHDM2 histone demethylase family. Fe(2+) is required as a cofactor.

Its subcellular location is the nucleus. In terms of biological role, probable histone demethylase that specifically demethylates 'Lys-9' of histone H3, thereby playing a central role in histone code. Demethylation of Lys residue generates formaldehyde and succinate. May be involved in hormone-dependent transcriptional activation, by participating in recruitment to androgen-receptor target genes. The chain is Probable JmjC domain-containing histone demethylation protein 2C (Jmjd1c) from Mus musculus (Mouse).